A 226-amino-acid polypeptide reads, in one-letter code: Leucyl/phenylalanyl-tRNA--protein transferase (226 aa).

It belongs to the L/F-transferase family.

The protein localises to the cytoplasm. The catalysed reaction is N-terminal L-lysyl-[protein] + L-leucyl-tRNA(Leu) = N-terminal L-leucyl-L-lysyl-[protein] + tRNA(Leu) + H(+). It catalyses the reaction N-terminal L-arginyl-[protein] + L-leucyl-tRNA(Leu) = N-terminal L-leucyl-L-arginyl-[protein] + tRNA(Leu) + H(+). The enzyme catalyses L-phenylalanyl-tRNA(Phe) + an N-terminal L-alpha-aminoacyl-[protein] = an N-terminal L-phenylalanyl-L-alpha-aminoacyl-[protein] + tRNA(Phe). Functions in the N-end rule pathway of protein degradation where it conjugates Leu, Phe and, less efficiently, Met from aminoacyl-tRNAs to the N-termini of proteins containing an N-terminal arginine or lysine. The chain is Leucyl/phenylalanyl-tRNA--protein transferase from Pseudomonas fluorescens (strain Pf0-1).